A 617-amino-acid chain; its full sequence is Na(+)/H(+) antiporter NhaA 1 (617 aa).

A na(+)/H(+) antiporter NhaA region spans residues 1–433 (MTVTEQTTAR…GWAIFRITDW (433 aa)). Helical transmembrane passes span 33-53 (AAAL…SPWA), 75-95 (MTVK…IVGL), 113-133 (AVPV…FLAF), 141-161 (HAWG…LAII), 171-191 (LFLL…IAVF), 194-214 (DAIQ…LALV), 234-254 (VALY…ALLI), 304-324 (VGPA…AGVL), 340-360 (WGVV…ATWL), 378-398 (IAGG…IVDI), and 411-431 (IGVL…FRIT). Positions 434 to 617 (LSPPEPVGLK…LIRALEAGRR (184 aa)) constitute a Thioredoxin domain.

It in the N-terminal section; belongs to the NhaA Na(+)/H(+) (TC 2.A.33) antiporter family.

The protein resides in the cell membrane. It catalyses the reaction Na(+)(in) + 2 H(+)(out) = Na(+)(out) + 2 H(+)(in). In terms of biological role, na(+)/H(+) antiporter that extrudes sodium in exchange for external protons. The sequence is that of Na(+)/H(+) antiporter NhaA 1 from Mycolicibacterium vanbaalenii (strain DSM 7251 / JCM 13017 / BCRC 16820 / KCTC 9966 / NRRL B-24157 / PYR-1) (Mycobacterium vanbaalenii).